The chain runs to 459 residues: MLTLNSTIKSVTGSFQSASMLARFASTHHKVLVVGGGSAGISVAHQIYNKFSKYRFANDQGKDTSLKPGEIGIVDGAKYHYYQPGWTLTGAGLSSVAKTRRELASLVPADKFKLHPEFVKSLHPRENKIVTQSGQEISYDYLVMAAGIYTDFGRIKGLTEALDDPNTPVVTIYSEKYADAVYPWIEKTKSGNAIFTQPSGVLKCAGAPQKIMWMAEDYWRRHKVRSNIDVSFYTGMPTLFSVKRYSDALLRQNEQLHRNVKINYKDELVEVKGSERKAVFKNLNDGSLFERPFDLLHAVPSMRSHEFIAKSDLADKSGFVAVDQSTTQSTKFPNVFAIGDCSGLPTSKTYAAITAQAPVMVHNLWSFVNGKNLTASYNGYTSCPLLTGYGKLILAEFLYKQEPKESFGRFSRFLDQTVPRRMFYHLKKDFFPFVYWNFAVRNGKWYGSRGLIPPHFPVN.

A mitochondrion-targeting transit peptide spans 1 to 24; sequence MLTLNSTIKSVTGSFQSASMLARF. Residue 35 to 39 participates in FAD binding; it reads GGGSA. Residues cysteine 204 and cysteine 383 each act as cysteine persulfide intermediate in the active site.

Belongs to the SQRD family. It depends on FAD as a cofactor.

The protein localises to the mitochondrion. Its function is as follows. Catalyzes the oxidation of hydrogen sulfide, with the help of a quinone. In Schizosaccharomyces pombe (strain 972 / ATCC 24843) (Fission yeast), this protein is Sulfide:quinone oxidoreductase, mitochondrial (hmt2).